The sequence spans 122 residues: Large ribosomal subunit protein uL14 (122 aa).

The protein belongs to the universal ribosomal protein uL14 family. Part of the 50S ribosomal subunit. Forms a cluster with proteins L3 and L19. In the 70S ribosome, L14 and L19 interact and together make contacts with the 16S rRNA in bridges B5 and B8.

In terms of biological role, binds to 23S rRNA. Forms part of two intersubunit bridges in the 70S ribosome. This chain is Large ribosomal subunit protein uL14, found in Mycoplasma capricolum subsp. capricolum (strain California kid / ATCC 27343 / NCTC 10154).